A 464-amino-acid chain; its full sequence is 3-isopropylmalate dehydratase large subunit (464 aa).

Residues C337, C397, and C400 each coordinate [4Fe-4S] cluster.

This sequence belongs to the aconitase/IPM isomerase family. LeuC type 1 subfamily. Heterodimer of LeuC and LeuD. The cofactor is [4Fe-4S] cluster.

It carries out the reaction (2R,3S)-3-isopropylmalate = (2S)-2-isopropylmalate. It participates in amino-acid biosynthesis; L-leucine biosynthesis; L-leucine from 3-methyl-2-oxobutanoate: step 2/4. Its function is as follows. Catalyzes the isomerization between 2-isopropylmalate and 3-isopropylmalate, via the formation of 2-isopropylmaleate. The sequence is that of 3-isopropylmalate dehydratase large subunit from Bacillus cereus (strain ATCC 14579 / DSM 31 / CCUG 7414 / JCM 2152 / NBRC 15305 / NCIMB 9373 / NCTC 2599 / NRRL B-3711).